Here is a 320-residue protein sequence, read N- to C-terminus: Acetyl-coenzyme A carboxylase carboxyl transferase subunit alpha (320 aa).

The region spanning 39–293 (ALDAKAAKLL…RGAIAAMLKE (255 aa)) is the CoA carboxyltransferase C-terminal domain.

Belongs to the AccA family. Acetyl-CoA carboxylase is a heterohexamer composed of biotin carboxyl carrier protein (AccB), biotin carboxylase (AccC) and two subunits each of ACCase subunit alpha (AccA) and ACCase subunit beta (AccD).

It localises to the cytoplasm. It carries out the reaction N(6)-carboxybiotinyl-L-lysyl-[protein] + acetyl-CoA = N(6)-biotinyl-L-lysyl-[protein] + malonyl-CoA. It participates in lipid metabolism; malonyl-CoA biosynthesis; malonyl-CoA from acetyl-CoA: step 1/1. In terms of biological role, component of the acetyl coenzyme A carboxylase (ACC) complex. First, biotin carboxylase catalyzes the carboxylation of biotin on its carrier protein (BCCP) and then the CO(2) group is transferred by the carboxyltransferase to acetyl-CoA to form malonyl-CoA. The polypeptide is Acetyl-coenzyme A carboxylase carboxyl transferase subunit alpha (Ruegeria pomeroyi (strain ATCC 700808 / DSM 15171 / DSS-3) (Silicibacter pomeroyi)).